A 279-amino-acid polypeptide reads, in one-letter code: D-aminoacyl-tRNA deacylase (279 aa).

The tract at residues 81–100 is disordered; that stretch reads GRKSLTVHHPGNPTEDNSLG.

The protein belongs to the DtdA deacylase family. In terms of assembly, monomer. Zn(2+) serves as cofactor.

The enzyme catalyses a D-aminoacyl-tRNA + H2O = a tRNA + a D-alpha-amino acid + H(+). The catalysed reaction is glycyl-tRNA(Ala) + H2O = tRNA(Ala) + glycine + H(+). D-aminoacyl-tRNA deacylase with broad substrate specificity. By recycling D-aminoacyl-tRNA to D-amino acids and free tRNA molecules, this enzyme counteracts the toxicity associated with the formation of D-aminoacyl-tRNA entities in vivo. This Aeropyrum pernix (strain ATCC 700893 / DSM 11879 / JCM 9820 / NBRC 100138 / K1) protein is D-aminoacyl-tRNA deacylase.